A 690-amino-acid chain; its full sequence is NF-kappa-B-repressing factor (690 aa).

The segment at 1–296 (MEKILHMAEG…FKHIIGEDLV (296 aa)) is active repression domain. The Nuclear localization signal motif lies at 25–45 (KPSKGQKRYLSTYDGQNPPKK). 3 disordered regions span residues 27 to 49 (SKGQKRYLSTYDGQNPPKKQAGS), 65 to 85 (SSSKAERQEDPYGPQTKDVNG), and 133 to 160 (YFDSGNPAPSSTSQQANCQPAPEPPPSQ). Lys-68 participates in a covalent cross-link: Glycyl lysine isopeptide (Lys-Gly) (interchain with G-Cter in SUMO2). The segment covering 139 to 150 (PAPSSTSQQANC) has biased composition (polar residues). Residues 296 to 388 (VVCQIGMLSY…RVFLQDHCLA (93 aa)) mediate DNA binding. A compositionally biased stretch (polar residues) spans 414 to 425 (PTYPSVKSSQCH). Residues 414 to 436 (PTYPSVKSSQCHSGSSPKGSGKK) are disordered. Lys-500 is covalently cross-linked (Glycyl lysine isopeptide (Lys-Gly) (interchain with G-Cter in SUMO2)). One can recognise a G-patch domain in the interval 551 to 596 (EDNIGNQLLRKMGWTGGGLGKSGEGIREPISVKEQHKREGLGLDVE). Residues 600–664 (KIAKRDIEQI…DRYLVVGRKR (65 aa)) form the R3H domain. Ser-618 is subject to Phosphoserine. Residues Lys-666 and Lys-674 each participate in a glycyl lysine isopeptide (Lys-Gly) (interchain with G-Cter in SUMO2) cross-link.

In terms of assembly, interacts with NF-kappa-B. Interacts with XRN2. Interacts (via G-patch domain) with DHX15; promoting the RNA helicase activity of DHX15.

Its subcellular location is the nucleus. The protein resides in the nucleolus. Its function is as follows. Enhances the ATPase activity of DHX15 by acting like a brace that tethers mobile sections of DHX15 together, stabilizing a functional conformation with high RNA affinity of DHX15. Involved in the constitutive silencing of the interferon beta promoter, independently of the virus-induced signals, and in the inhibition of the basal and cytokine-induced iNOS promoter activity. Also involved in the regulation of IL-8 transcription. May also act as a DNA-binding transcription regulator: interacts with a specific negative regulatory element (NRE) 5'-AATTCCTCTGA-3' to mediate transcriptional repression of certain NK-kappa-B responsive genes. This is NF-kappa-B-repressing factor (Nkrf) from Mus musculus (Mouse).